Consider the following 413-residue polypeptide: MAGAAPEGSQFDARQYDSKMTELLNAEGQDFFTSYDEVYHSFDAMGLKENLLRGIYAYGFEKPSAIQQRGIVPFCKGLDVIQQAQSGTGKTATFCSGILQQLDYELLDCQALVLAPTRELAQQIEKVMRALGDYLGVKVHACVGGTSVREDQRILSSGVHVVVGTPGRVFDMLRRQSLRPDHIKMFVLDEADEMLSRGFKDQIYDIFQLLPPKIQVGVFSATMPPEALEITRKFMNKPVRILVKRDELTLEGIKQFYVNVDKEEWKLETLCDLYETLAITQSVIFVNTRRKVDWLTDKMRSRDHTVSATHGDMDQNTRDIIMREFRSGSSRVLITTDLLARGIDVQQVSLVINYDLPTQPENYLHRIGRSGRFGRKGVSINFVTSDDERMLSDIQRFYNVVIEELPANVADLL.

Positions 40-68 match the Q motif motif; sequence HSFDAMGLKENLLRGIYAYGFEKPSAIQQ. The 171-residue stretch at 71–241 folds into the Helicase ATP-binding domain; the sequence is IVPFCKGLDV…RKFMNKPVRI (171 aa). 84 to 91 contacts ATP; sequence AQSGTGKT. Residues 189–192 carry the DEAD box motif; sequence DEAD. Residues 252-413 form the Helicase C-terminal domain; the sequence is GIKQFYVNVD…ELPANVADLL (162 aa).

Belongs to the DEAD box helicase family. eIF4A subfamily. As to quaternary structure, eIF4F is a multi-subunit complex, the composition of which varies with external and internal environmental conditions. It is composed of at least EIF4A, EIF4E and EIF4G.

It carries out the reaction ATP + H2O = ADP + phosphate + H(+). ATP-dependent RNA helicase which is a subunit of the eIF4F complex involved in cap recognition and is required for mRNA binding to ribosome. In the current model of translation initiation, eIF4A unwinds RNA secondary structures in the 5'-UTR of mRNAs which is necessary to allow efficient binding of the small ribosomal subunit, and subsequent scanning for the initiator codon. This chain is Eukaryotic initiation factor 4A-9, found in Nicotiana tabacum (Common tobacco).